The sequence spans 104 residues: Large ribosomal subunit protein uL24 (104 aa).

This sequence belongs to the universal ribosomal protein uL24 family. As to quaternary structure, part of the 50S ribosomal subunit.

In terms of biological role, one of two assembly initiator proteins, it binds directly to the 5'-end of the 23S rRNA, where it nucleates assembly of the 50S subunit. One of the proteins that surrounds the polypeptide exit tunnel on the outside of the subunit. The chain is Large ribosomal subunit protein uL24 from Serratia proteamaculans (strain 568).